We begin with the raw amino-acid sequence, 559 residues long: Heterochromatin protein 1-binding protein 3 (559 aa).

The segment at 1 to 132 is disordered; that stretch reads MATDLSEAEP…SKEKEKKVKK (132 aa). 2 stretches are compositionally biased toward basic and acidic residues: residues 51 to 68 and 96 to 128; these read TPPK…KADA and EQPK…EKEK. H15 domains follow at residues 158-233, 256-331, and 339-414; these read SRPK…VVVS, QQVK…QLKK, and GGTL…QLCF. The PxVxL motif signature appears at 256-260; that stretch reads QQVKL. Residues 421–559 form a disordered region; the sequence is DVLYPEKQQD…AMRKSLRAKK (139 aa). Residues 429–459 show a composition bias toward acidic residues; that stretch reads QDEDSEESQEEEEEESEEEEESEEEESEEEE. The segment covering 463-515 has biased composition (basic residues); the sequence is KKRMQKRPPPKSRSRAPPMKRRESKPKPRKTPAAHQGKAKPPPKVKTPVKKAK. Over residues 516–533 the composition is skewed to low complexity; that stretch reads PAAPAIKKPSGGSSSKKP. The segment covering 549–559 has biased composition (basic residues); it reads SAMRKSLRAKK.

The protein resides in the nucleus. It is found in the chromosome. Functionally, component of heterochromatin that maintains heterochromatin integrity during G1/S progression and regulates the duration of G1 phase to critically influence cell proliferative capacity. This is Heterochromatin protein 1-binding protein 3 (HP1BP3) from Gallus gallus (Chicken).